Here is a 139-residue protein sequence, read N- to C-terminus: Large ribosomal subunit protein uL16 (139 aa).

The protein belongs to the universal ribosomal protein uL16 family. In terms of assembly, part of the 50S ribosomal subunit.

Its function is as follows. Binds 23S rRNA and is also seen to make contacts with the A and possibly P site tRNAs. This chain is Large ribosomal subunit protein uL16, found in Mycoplasma pneumoniae (strain ATCC 29342 / M129 / Subtype 1) (Mycoplasmoides pneumoniae).